We begin with the raw amino-acid sequence, 181 residues long: GTPase RhebL1 (181 aa).

GTP contacts are provided by residues 30–36, G61, 117–120, and 147–148; these read LEDYDPT, NKAD, and SA. Residues 33–41 carry the Effector region motif; it reads YDPTVENTY. T36 is a Mg(2+) binding site. C178 carries the cysteine methyl ester modification. A lipid anchor (S-farnesyl cysteine) is attached at C178. Residues 179 to 181 constitute a propeptide, removed in mature form; that stretch reads HLM.

It belongs to the small GTPase superfamily. Rheb family. In terms of assembly, interacts with MTOR.

It is found in the endomembrane system. Its subcellular location is the cytoplasm. The enzyme catalyses GTP + H2O = GDP + phosphate + H(+). In terms of biological role, binds GTP and exhibits intrinsic GTPase activity. May activate NF-kappa-B-mediated gene transcription. Promotes signal transduction through MTOR, activates RPS6KB1, and is a downstream target of the small GTPase-activating proteins TSC1 and TSC2. This Bos taurus (Bovine) protein is GTPase RhebL1 (RHEBL1).